A 489-amino-acid polypeptide reads, in one-letter code: Pluviatolide synthase (489 aa).

A helical membrane pass occupies residues 6-26; the sequence is SVLAMSSTLILALAMALIFLF. Heme is bound at residue cysteine 432.

The protein belongs to the cytochrome P450 family. Heme is required as a cofactor. As to expression, expressed in leaves, rhizomes and stems.

The protein resides in the membrane. The enzyme catalyses (-)-matairesinol + reduced [NADPH--hemoprotein reductase] + O2 = (-)-pluviatolide + oxidized [NADPH--hemoprotein reductase] + 2 H2O + H(+). It functions in the pathway aromatic compound metabolism; phenylpropanoid biosynthesis. Its function is as follows. Cytochrome P450 involved in the biosynthesis of etoposide, a chemotherapeutic compound of the topoisomerase inhibitor family. Catalyzes the conversion of matairesinol to pluviatolide. This Sinopodophyllum hexandrum (Himalayan may apple) protein is Pluviatolide synthase.